A 713-amino-acid polypeptide reads, in one-letter code: Polyribonucleotide nucleotidyltransferase (713 aa).

Aspartate 491 and aspartate 497 together coordinate Mg(2+). A KH domain is found at proline 558 to isoleucine 617. One can recognise an S1 motif domain in the interval glycine 627–lysine 695.

The protein belongs to the polyribonucleotide nucleotidyltransferase family. Mg(2+) is required as a cofactor.

It localises to the cytoplasm. It catalyses the reaction RNA(n+1) + phosphate = RNA(n) + a ribonucleoside 5'-diphosphate. Functionally, involved in mRNA degradation. Catalyzes the phosphorolysis of single-stranded polyribonucleotides processively in the 3'- to 5'-direction. In Burkholderia cenocepacia (strain ATCC BAA-245 / DSM 16553 / LMG 16656 / NCTC 13227 / J2315 / CF5610) (Burkholderia cepacia (strain J2315)), this protein is Polyribonucleotide nucleotidyltransferase.